The primary structure comprises 80 residues: U19-lycotoxin-Ls1a (80 aa).

The signal sequence occupies residues 1–22; it reads MSPKVQALIFIVGLITLLAAHA. A propeptide spanning residues 23 to 34 is cleaved from the precursor; the sequence is QEELSDNIESER. 4 disulfide bridges follow: Cys36/Cys50, Cys43/Cys55, Cys49/Cys66, and Cys57/Cys64.

Belongs to the neurotoxin 02 (plectoxin) family. 05 (U19-lycotoxin) subfamily. Expressed by the venom gland.

It localises to the secreted. This Lycosa singoriensis (Wolf spider) protein is U19-lycotoxin-Ls1a.